An 852-amino-acid chain; its full sequence is Thrombospondin type-1 domain-containing protein 1 (852 aa).

Positions 1-24 (MKPMLKDFSNLLLVVLCDYVLGEA) are cleaved as a signal peptide. The Extracellular portion of the chain corresponds to 25–413 (EYLLLREPGH…QPQGPVKSNN (389 aa)). N39, N53, N58, N69, N80, N135, and N304 each carry an N-linked (GlcNAc...) asparagine glycan. Residues 340–393 (TETWGLWQPWSQCSATCGDGVRERRRVCLTSFPSSPVCPGMSLEASLCSLEECA) enclose the TSP type-1 domain. Cystine bridges form between C352-C387, C356-C392, and C367-C377. A helical membrane pass occupies residues 414-434 (IVTVTGISLCLFIIIATVLIT). At 435–852 (LWRRFGRPAK…STLSVEKLVI (418 aa)) the chain is on the cytoplasmic side. 2 disordered regions span residues 444–517 (KCST…ESFQ) and 624–799 (LIRK…RKDK). A Phosphoserine modification is found at S463. A compositionally biased stretch (basic residues) spans 645–654 (ARNAHFRRTA). Over residues 655-669 (SFHEARQARPFRERS) the composition is skewed to basic and acidic residues. Positions 670 to 685 (MSTLTPRQAPAYSSRT) are enriched in polar residues. Over residues 686 to 696 (RTCEQAEDRFR) the composition is skewed to basic and acidic residues. Composition is skewed to polar residues over residues 766–778 (SHKSVSRKQSSPI) and 785–794 (QRVSSLSPSQ).

In terms of assembly, part of a complex composed of THSD1, PTK2/FAK1, TLN1 and VCL. Interacts with TLN1.

Its subcellular location is the endosome membrane. The protein localises to the cell junction. It is found in the focal adhesion. It localises to the membrane. The protein resides in the secreted. Is a positive regulator of nascent focal adhesion assembly, involved in the modulation of endothelial cell attachment to the extracellular matrix. The polypeptide is Thrombospondin type-1 domain-containing protein 1 (THSD1) (Homo sapiens (Human)).